The primary structure comprises 557 residues: Dihydroxy-acid dehydratase (557 aa).

Aspartate 78 contributes to the Mg(2+) binding site. A [2Fe-2S] cluster-binding site is contributed by cysteine 119. The Mg(2+) site is built by aspartate 120 and lysine 121. Lysine 121 carries the post-translational modification N6-carboxylysine. Cysteine 192 is a binding site for [2Fe-2S] cluster. Glutamate 442 contributes to the Mg(2+) binding site. Residue serine 468 is the Proton acceptor of the active site.

This sequence belongs to the IlvD/Edd family. Homodimer. Requires [2Fe-2S] cluster as cofactor. Mg(2+) serves as cofactor.

The catalysed reaction is (2R)-2,3-dihydroxy-3-methylbutanoate = 3-methyl-2-oxobutanoate + H2O. It carries out the reaction (2R,3R)-2,3-dihydroxy-3-methylpentanoate = (S)-3-methyl-2-oxopentanoate + H2O. Its pathway is amino-acid biosynthesis; L-isoleucine biosynthesis; L-isoleucine from 2-oxobutanoate: step 3/4. It functions in the pathway amino-acid biosynthesis; L-valine biosynthesis; L-valine from pyruvate: step 3/4. Functions in the biosynthesis of branched-chain amino acids. Catalyzes the dehydration of (2R,3R)-2,3-dihydroxy-3-methylpentanoate (2,3-dihydroxy-3-methylvalerate) into 2-oxo-3-methylpentanoate (2-oxo-3-methylvalerate) and of (2R)-2,3-dihydroxy-3-methylbutanoate (2,3-dihydroxyisovalerate) into 2-oxo-3-methylbutanoate (2-oxoisovalerate), the penultimate precursor to L-isoleucine and L-valine, respectively. This is Dihydroxy-acid dehydratase from Bacillus cereus (strain AH820).